We begin with the raw amino-acid sequence, 265 residues long: 3-methyl-2-oxobutanoate hydroxymethyltransferase (265 aa).

Residues Asp43 and Asp82 each contribute to the Mg(2+) site. Residues 43 to 44 (DS), Asp82, and Lys111 each bind 3-methyl-2-oxobutanoate. A Mg(2+)-binding site is contributed by Glu113. The active-site Proton acceptor is Glu180.

Belongs to the PanB family. In terms of assembly, homodecamer; pentamer of dimers. It depends on Mg(2+) as a cofactor.

It is found in the cytoplasm. The enzyme catalyses 3-methyl-2-oxobutanoate + (6R)-5,10-methylene-5,6,7,8-tetrahydrofolate + H2O = 2-dehydropantoate + (6S)-5,6,7,8-tetrahydrofolate. It participates in cofactor biosynthesis; (R)-pantothenate biosynthesis; (R)-pantoate from 3-methyl-2-oxobutanoate: step 1/2. Catalyzes the reversible reaction in which hydroxymethyl group from 5,10-methylenetetrahydrofolate is transferred onto alpha-ketoisovalerate to form ketopantoate. The chain is 3-methyl-2-oxobutanoate hydroxymethyltransferase from Francisella tularensis subsp. novicida (strain U112).